Reading from the N-terminus, the 161-residue chain is Regulator of ribonuclease activity A (161 aa).

The protein belongs to the RraA family. Homotrimer. Binds to both RNA-binding sites in the C-terminal region of Rne and to RhlB.

It is found in the cytoplasm. Functionally, globally modulates RNA abundance by binding to RNase E (Rne) and regulating its endonucleolytic activity. Can modulate Rne action in a substrate-dependent manner by altering the composition of the degradosome. Modulates RNA-binding and helicase activities of the degradosome. The chain is Regulator of ribonuclease activity A from Shewanella sediminis (strain HAW-EB3).